Consider the following 241-residue polypeptide: Small ribosomal subunit protein uS2 (241 aa).

The protein belongs to the universal ribosomal protein uS2 family.

In Klebsiella pneumoniae subsp. pneumoniae (strain ATCC 700721 / MGH 78578), this protein is Small ribosomal subunit protein uS2.